Consider the following 101-residue polypeptide: Small ribosomal subunit protein uS14 (101 aa).

Over residues 1-11 (MAKKSAIETNE) the composition is skewed to basic and acidic residues. The disordered stretch occupies residues 1-20 (MAKKSAIETNERRRKLATGH).

Belongs to the universal ribosomal protein uS14 family. As to quaternary structure, part of the 30S ribosomal subunit. Contacts proteins S3 and S10.

Its function is as follows. Binds 16S rRNA, required for the assembly of 30S particles and may also be responsible for determining the conformation of the 16S rRNA at the A site. The protein is Small ribosomal subunit protein uS14 of Xanthobacter autotrophicus (strain ATCC BAA-1158 / Py2).